We begin with the raw amino-acid sequence, 207 residues long: Nudix hydrolase 4 (207 aa).

The region spanning 58 to 194 (GYRQVVGCVP…WMREALEAFI (137 aa)) is the Nudix hydrolase domain. Residues 101–122 (GGWETDESMEEAALRETIEEAG) carry the Nudix box motif. E116 and E120 together coordinate Mg(2+).

The protein belongs to the Nudix hydrolase family. It depends on Mg(2+) as a cofactor. Requires Mn(2+) as cofactor. In terms of tissue distribution, expressed in roots, stems and leaves.

The enzyme catalyses ADP-D-ribose + H2O = D-ribose 5-phosphate + AMP + 2 H(+). It catalyses the reaction NAD(+) + H2O = beta-nicotinamide D-ribonucleotide + AMP + 2 H(+). The catalysed reaction is NADH + H2O = reduced beta-nicotinamide D-ribonucleotide + AMP + 2 H(+). Functionally, probably mediates the hydrolysis of some nucleoside diphosphate derivatives. In vitro, it can use both NADH and ADP-ribose as substrates; however the relevance of such substrates in vivo is unclear. This is Nudix hydrolase 4 (NUDT4) from Arabidopsis thaliana (Mouse-ear cress).